The chain runs to 1684 residues: Protein Wiz (1684 aa).

The segment at 1–77 (MEGLLAGGLA…PGLSEALPRA (77 aa)) is disordered. Residues 13–24 (DHPRGPAPREDI) are compositionally biased toward basic and acidic residues. 5 consecutive C2H2-type zinc fingers follow at residues 308–330 (FPCI…MSQH), 345–367 (LACS…WQLH), 454–477 (NTCV…RLVH), 734–756 (RKCP…VRGH), and 802–824 (MRCD…ARAH). A disordered region spans residues 854–876 (LPPSPLGREPGGPPRSFLTSRRP). Residues 903-925 (TTCEVCGACFETRKGLSSHARSH) form a C2H2-type 6 zinc finger. Residues lysine 916, lysine 972, lysine 988, lysine 1000, and lysine 1021 each participate in a glycyl lysine isopeptide (Lys-Gly) (interchain with G-Cter in SUMO2) cross-link. The segment at 1005 to 1072 (FSAKGLTHPS…PLNLTSGPEP (68 aa)) is disordered. Serine 1029 is modified (phosphoserine). Residue threonine 1031 is modified to Phosphothreonine. Glycyl lysine isopeptide (Lys-Gly) (interchain with G-Cter in SUMO2) cross-links involve residues lysine 1033 and lysine 1038. A phosphoserine mark is found at serine 1039 and serine 1045. Polar residues predominate over residues 1040-1057 (PQLSLSPRPTSPKAQWPQ). Threonine 1049 is subject to Phosphothreonine. Residues serine 1050 and serine 1058 each carry the phosphoserine modification. The interaction with CTBP1 and CTBP2 1 stretch occupies residues 1063-1067 (PLNLT). A C2H2-type 7 zinc finger spans residues 1076–1098 (IRCEFCGEFFENRKGLSSHARSH). Residue lysine 1089 forms a Glycyl lysine isopeptide (Lys-Gly) (interchain with G-Cter in SUMO2) linkage. 2 positions are modified to phosphoserine: serine 1112 and serine 1139. The interval 1127–1208 (SRPGGHLHPP…GLATPSLPKK (82 aa)) is disordered. Residues lysine 1141 and lysine 1145 each participate in a glycyl lysine isopeptide (Lys-Gly) (interchain with G-Cter in SUMO2) cross-link. Residues serine 1155, serine 1160, and serine 1167 each carry the phosphoserine modification. Residues lysine 1171 and lysine 1172 each participate in a glycyl lysine isopeptide (Lys-Gly) (interchain with G-Cter in SUMO2) cross-link. Serine 1179 and serine 1184 each carry phosphoserine. Lysine 1195 is subject to N6,N6,N6-trimethyllysine; by EHMT2; alternate. At lysine 1195 the chain carries N6,N6-dimethyllysine; by EHMT2; alternate. Lysine 1210 is covalently cross-linked (Glycyl lysine isopeptide (Lys-Gly) (interchain with G-Cter in SUMO2)). The interaction with CTBP1 and CTBP2 2 stretch occupies residues 1247–1251 (PLNLS). The C2H2-type 8 zinc finger occupies 1260-1282 (IRCEFCGEFFENRKGLSSHARSH). Residue lysine 1273 forms a Glycyl lysine isopeptide (Lys-Gly) (interchain with G-Cter in SUMO2) linkage. At serine 1296 the chain carries Phosphoserine. A Glycyl lysine isopeptide (Lys-Gly) (interchain with G-Cter in SUMO2) cross-link involves residue lysine 1315. The tract at residues 1320 to 1384 (AGDLAPALTE…SKPSAASYLG (65 aa)) is disordered. The segment covering 1335–1351 (AAPGALHSPLPLSPLAS) has biased composition (low complexity). 2 positions are modified to phosphoserine: serine 1342 and serine 1347. Glycyl lysine isopeptide (Lys-Gly) (interchain with G-Cter in SUMO2) cross-links involve residues lysine 1376, lysine 1389, lysine 1403, lysine 1405, and lysine 1415. A C2H2-type 9 zinc finger spans residues 1430 to 1452 (ACCELCGLYFENRKALASHARAH). Glycyl lysine isopeptide (Lys-Gly) (interchain with G-Cter in SUMO2) cross-links involve residues lysine 1481, lysine 1497, and lysine 1510. Disordered stretches follow at residues 1496-1587 (TKKF…GEEV) and 1592-1611 (QKLE…PSLV). Phosphoserine is present on serine 1550. Lysine 1556 is covalently cross-linked (Glycyl lysine isopeptide (Lys-Gly) (interchain with G-Cter in SUMO1); alternate). Residue lysine 1556 forms a Glycyl lysine isopeptide (Lys-Gly) (interchain with G-Cter in SUMO2); alternate linkage. Basic and acidic residues predominate over residues 1556–1574 (KSEEHQRQNINKFERRQAR). Glycyl lysine isopeptide (Lys-Gly) (interchain with G-Cter in SUMO2) cross-links involve residues lysine 1567 and lysine 1593. The segment covering 1599–1611 (QPPPRVRPVPSLV) has biased composition (pro residues). Residues 1629 to 1655 (LKCRFCEVEFQGPLSIQEEWVRHLQRH) form a C2H2-type 10 zinc finger. The tract at residues 1662 to 1684 (SKADPPPEEPQAPQAQTAAVEAP) is disordered. Lysine 1663 is covalently cross-linked (Glycyl lysine isopeptide (Lys-Gly) (interchain with G-Cter in SUMO2)). Positions 1672–1684 (QAPQAQTAAVEAP) are enriched in low complexity.

It belongs to the krueppel C2H2-type zinc-finger protein family. In terms of assembly, part of a complex containing at least CDYL, REST, WIZ, SETB1, EHMT1 and EHMT2. Interacts with EHMT1, EHMT2, CTBP1 and CTBP2. In terms of tissue distribution, according to PubMed:9795207, isoform L and isoform S are brain-specific. According to PubMed:16702210, isoform S is ubiquitously expressed.

It is found in the nucleus. Its function is as follows. May link EHMT1 and EHMT2 histone methyltransferases to the CTBP corepressor machinery. May be involved in EHMT1-EHMT2 heterodimer formation and stabilization. This Mus musculus (Mouse) protein is Protein Wiz (Wiz).